A 255-amino-acid polypeptide reads, in one-letter code: Adenosylcobinamide-GDP ribazoletransferase (255 aa).

6 helical membrane passes run 24–44 (LIAY…SLYV), 45–65 (AIYG…IYIV), 98–118 (VGAG…ISLS), 122–142 (LYIG…MMMI), 164–184 (KHDS…ALLS), and 187–207 (SIMI…MAVI).

Belongs to the CobS family. The cofactor is Mg(2+).

It localises to the cell membrane. The enzyme catalyses alpha-ribazole + adenosylcob(III)inamide-GDP = adenosylcob(III)alamin + GMP + H(+). It carries out the reaction alpha-ribazole 5'-phosphate + adenosylcob(III)inamide-GDP = adenosylcob(III)alamin 5'-phosphate + GMP + H(+). The protein operates within cofactor biosynthesis; adenosylcobalamin biosynthesis; adenosylcobalamin from cob(II)yrinate a,c-diamide: step 7/7. In terms of biological role, joins adenosylcobinamide-GDP and alpha-ribazole to generate adenosylcobalamin (Ado-cobalamin). Also synthesizes adenosylcobalamin 5'-phosphate from adenosylcobinamide-GDP and alpha-ribazole 5'-phosphate. This is Adenosylcobinamide-GDP ribazoletransferase from Thermoplasma acidophilum (strain ATCC 25905 / DSM 1728 / JCM 9062 / NBRC 15155 / AMRC-C165).